A 363-amino-acid polypeptide reads, in one-letter code: Peptide chain release factor 1 (363 aa).

Residue Q237 is modified to N5-methylglutamine. Over residues 284 to 296 (EDEKRRSAEESTR) the composition is skewed to basic and acidic residues. The disordered stretch occupies residues 284–305 (EDEKRRSAEESTRRSLVASGDR).

It belongs to the prokaryotic/mitochondrial release factor family. In terms of processing, methylated by PrmC. Methylation increases the termination efficiency of RF1.

It localises to the cytoplasm. Functionally, peptide chain release factor 1 directs the termination of translation in response to the peptide chain termination codons UAG and UAA. In Shewanella baltica (strain OS195), this protein is Peptide chain release factor 1.